The chain runs to 304 residues: Glycine--tRNA ligase alpha subunit (304 aa).

The protein belongs to the class-II aminoacyl-tRNA synthetase family. In terms of assembly, tetramer of two alpha and two beta subunits.

It localises to the cytoplasm. The enzyme catalyses tRNA(Gly) + glycine + ATP = glycyl-tRNA(Gly) + AMP + diphosphate. This Streptococcus agalactiae serotype III (strain NEM316) protein is Glycine--tRNA ligase alpha subunit.